Consider the following 1239-residue polypeptide: DNA polymerase subunit gamma-1 (1239 aa).

The tract at residues 1 to 68 (MSRLLWRKVA…PQVLSSEGGQ (68 aa)) is disordered. Low complexity-rich tracts occupy residues 9 to 36 (VAGA…SDPS) and 44 to 60 (QQQQ…QQPQ). Residues 43 to 55 (QQQQQQQQQQQQQ) form a does not contribute to polymerase and exonuclease enzymatic activities region. Positions 196 to 200 (VFDVE) match the Exo I motif. Aspartate 198 acts as the Exonuclease activity in catalysis. The short motif at 267–275 (VGHNVSFDR) is the Exo II element. Serine 306 serves as a coordination point for DNA. The interval 318-340 (GKHKVQPPTKQGQKSQRKARRGP) is disordered. The Exo III signature appears at 395–403 (YCAQDVWAT). A disordered region spans residues 506-531 (EPATASKLPIEGAGAPGDPMDQEDLG). Positions 510 to 571 (ASKLPIEGAG…RPQHLPGHPG (62 aa)) are accessory-interacting determinant. Arginine 579 is an RNA binding site. Serine 593 serves as a coordination point for DNA. Residues histidine 754, glycine 763, and lysine 768 each contribute to the RNA site. Positions 806 and 849 each coordinate DNA. The tract at residues 858–864 (TWLTASN) is trigger loop. Residues serine 863 and arginine 869 each coordinate RNA. The Pol A signature appears at 887 to 896 (VGADVDSQEL). Residues aspartate 890, valine 891, serine 893, glutamate 895, arginine 943, lysine 947, and tyrosine 951 each coordinate a 2'-deoxyribonucleoside 5'-triphosphate. Residues aspartate 890 and valine 891 each coordinate Mg(2+). Positions 943–958 (REHAKIFNYGRIYGAG) match the Pol B motif. The DNA site is built by threonine 1094 and serine 1095. The Pol C motif lies at 1134–1141 (HDEVRYLV). Position 1135 (aspartate 1135) interacts with a 2'-deoxyribonucleoside 5'-triphosphate. Residue aspartate 1135 coordinates Mg(2+).

It belongs to the DNA polymerase type-A family. In terms of assembly, heterotrimer composed of a catalytic subunit and a homodimer of accessory subunits (POLG:POLG2). Interacts with TTC3. Interacts with LIG3. The cofactor is Mg(2+).

The protein localises to the mitochondrion. It localises to the mitochondrion matrix. Its subcellular location is the mitochondrion nucleoid. The enzyme catalyses DNA(n) + a 2'-deoxyribonucleoside 5'-triphosphate = DNA(n+1) + diphosphate. It carries out the reaction a 3'-end 2'-deoxyribonucleotidyl-deoxyribonucleotide-DNA + H2O = a 3'-end 2'-deoxyribonucleotide-DNA + a 2'-deoxyribonucleoside 5'-phosphate + H(+). It catalyses the reaction a 5'-end 2'-deoxyribose-2'-deoxyribonucleotide-DNA = (2E,4S)-4-hydroxypenten-2-al-5-phosphate + a 5'-end 5'-phospho-2'-deoxyribonucleoside-DNA + H(+). Inhibited by dideoxynucleotides such as antiviral agent zalcitabine. Functionally, catalytic subunit of DNA polymerase gamma solely responsible for replication of mitochondrial DNA (mtDNA). Replicates both heavy and light strands of the circular mtDNA genome using a single-stranded DNA template, RNA primers and the four deoxyribonucleoside triphosphates as substrates. Has 5' -&gt; 3' polymerase activity. Functionally interacts with TWNK and SSBP1 at the replication fork to form a highly processive replisome, where TWNK unwinds the double-stranded DNA template prior to replication and SSBP1 covers the parental heavy strand to enable continuous replication of the entire mitochondrial genome. A single nucleotide incorporation cycle includes binding of the incoming nucleotide at the insertion site, a phosphodiester bond formation reaction that extends the 3'-end of the primer DNA, and translocation of the primer terminus to the post-insertion site. After completing replication of a mtDNA strand, mediates 3' -&gt; 5' exonucleolytic degradation at the nick to enable proper ligation. Highly accurate due to high nucleotide selectivity and 3' -&gt; 5' exonucleolytic proofreading. Proficiently corrects base substitutions, single-base additions and deletions in non-repetitive sequences and short repeats, but displays lower proofreading activity when replicating longer homopolymeric stretches. Exerts exonuclease activity toward single-stranded DNA and double-stranded DNA containing 3'-terminal mispairs. When a misincorporation occurs, transitions from replication to a pro-nucleolytic editing mode and removes the missincorporated nucleoside in the exonuclease active site. Proceeds via an SN2 nucleolytic mechanism in which Asp-198 catalyzes phosphodiester bond hydrolysis and Glu-200 stabilizes the leaving group. As a result the primer strand becomes one nucleotide shorter and is positioned in the post-insertion site, ready to resume DNA synthesis. Exerts 5'-deoxyribose phosphate (dRP) lyase activity and mediates repair-associated mtDNA synthesis (gap filling) in base-excision repair pathway. Catalyzes the release of the 5'-terminal 2-deoxyribose-5-phosphate sugar moiety from incised apurinic/apyrimidinic (AP) sites to produce a substrate for DNA ligase. The dRP lyase reaction does not require divalent metal ions and likely proceeds via a Schiff base intermediate in a beta-elimination reaction mechanism. In Homo sapiens (Human), this protein is DNA polymerase subunit gamma-1.